The sequence spans 1855 residues: Chitin synthase 5 (1855 aa).

One can recognise a Myosin motor domain in the interval 1 to 778 (MSSAPTTQQN…CWRQIVRAGD (778 aa)). 95–102 (GESGTGKT) lines the ATP pocket. 3 N-linked (GlcNAc...) asparagine glycosylation sites follow: Asn-221, Asn-520, and Asn-558. Residues 585-650 (AVQQASVASK…PKSADTQQGA (66 aa)) form a disordered region. Residues 658–682 (LDNINKSLTAPNTNPYFFFCLKPND) are actin-binding. Residue Asn-662 is glycosylated (N-linked (GlcNAc...) asparagine). Transmembrane regions (helical) follow at residues 887–907 (WLVLVYVLTWWCPDWAIRIIG) and 922–942 (VAINFIIWLSCAFVVFFMVGF). The Cytochrome b5 heme-binding domain maps to 950-1008 (QHVFSPSELTSYDGKNSDAYVAIRGNVFDLGAFIPQHYPSIVPASALEKYAGTDATNLF). Residues Asn-1037 and Asn-1061 are each glycosylated (N-linked (GlcNAc...) asparagine). Residues 1199 to 1219 (ILLAVSIMLVSVICFKFLAAL) traverse the membrane as a helical segment. Asn-1422, Asn-1456, and Asn-1562 each carry an N-linked (GlcNAc...) asparagine glycan. The next 3 helical transmembrane spans lie at 1587–1607 (FVVFLDLLSTIVQPVIVGYIV), 1621–1641 (ATTAFILIAAIYGLQAIIFIV), and 1650–1670 (WMIIYILATPIFSFCLPLIAF). Residues Asn-1755 and Asn-1767 are each glycosylated (N-linked (GlcNAc...) asparagine). The DEK-C domain occupies 1797–1852 (MPNDDAILAEIREILATADLMTVTKKSIKAELERRFGVPMDSRRQYIGSATEAILS).

In the N-terminal section; belongs to the TRAFAC class myosin-kinesin ATPase superfamily. Myosin family. This sequence in the C-terminal section; belongs to the chitin synthase family. Class V subfamily.

It is found in the apical cell membrane. The protein localises to the cell septum. The protein resides in the cell tip. The enzyme catalyses [(1-&gt;4)-N-acetyl-beta-D-glucosaminyl](n) + UDP-N-acetyl-alpha-D-glucosamine = [(1-&gt;4)-N-acetyl-beta-D-glucosaminyl](n+1) + UDP + H(+). Its function is as follows. Polymerizes chitin, a structural polymer of the cell wall and septum, by transferring the sugar moiety of UDP-GlcNAc to the non-reducing end of the growing chitin polymer. In Zymoseptoria tritici (strain CBS 115943 / IPO323) (Speckled leaf blotch fungus), this protein is Chitin synthase 5.